The chain runs to 453 residues: MAGESFPFTSSTLRALRLQREWLDWEDRRRAAAQQCRRHRDLPCPQAQLLRPRRSCRDPAVHNALFSGDLQQLQILFQDEDAANMIVETVSNQLAWSAEQGFWVLTPKTKQTAPLTIAVARGYTDCARHLILQGAELDARIGGRAALHEACAQAHPDCVRLLLTFGAKANVSSEEGMTPLHLCTSPESLQCAKLLLEAGASVNVASQESEVTPLHVAAARGLEQHVALYLQNGADVALRTSQGETALNAACAGAEGPGSSRQHEAAARQLLEAGADPQAAGRKRHTPLHNACANGCGGLAELLLRHGASPGVTNGAGHTPMDCALQAVQDAPNWEPEVLFAALLDYGAQPVHPEMLKHCANFPRALEVLLNAYPCVPSCDPWVEAVLPELWQEHEAFYSSALSMENQPRQLQHLARLAVRAQLGSHCRQAAAQLPLPPLLRDYLLLGVEGRIQ.

ANK repeat units follow at residues 56 to 85 (CRDP…AANM), 110 to 139 (KQTA…ELDA), 142 to 171 (GGRA…KANV), 175 to 204 (EGMT…SVNV), 209 to 238 (SEVT…DVAL), 242 to 279 (QGET…DPQA), and 283 to 312 (KRHT…SPGV). The SOCS box domain maps to 397–453 (FYSSALSMENQPRQLQHLARLAVRAQLGSHCRQAAAQLPLPPLLRDYLLLGVEGRIQ).

It belongs to the ankyrin SOCS box (ASB) family.

Its pathway is protein modification; protein ubiquitination. May be a substrate-recognition component of a SCF-like ECS (Elongin-Cullin-SOCS-box protein) E3 ubiquitin-protein ligase complex which mediates the ubiquitination and subsequent proteasomal degradation of target proteins. The protein is Ankyrin repeat and SOCS box protein 16 (Asb16) of Mus musculus (Mouse).